Consider the following 958-residue polypeptide: UvrABC system protein A (958 aa).

One can recognise an ABC transporter 1 domain in the interval 1–232; the sequence is MQSKSIKIQG…IETALKLGEG (232 aa). Position 33-40 (33-40) interacts with ATP; that stretch reads GLSGSGKS. A C4-type zinc finger spans residues 252-279; that stretch reads CPICGFSIGELEPRLFSFNSPFGACPSC. ABC transporter domains follow at residues 315–593 and 604–935; these read QYYP…KYLS and RRKP…GKYL. 639–646 is an ATP binding site; the sequence is GVSGSGKS. The C4-type zinc-finger motif lies at 738–764; it reads CEACRGDGILKIEMHFLPDVYVPCEVC.

This sequence belongs to the ABC transporter superfamily. UvrA family. In terms of assembly, forms a heterotetramer with UvrB during the search for lesions.

The protein localises to the cytoplasm. In terms of biological role, the UvrABC repair system catalyzes the recognition and processing of DNA lesions. UvrA is an ATPase and a DNA-binding protein. A damage recognition complex composed of 2 UvrA and 2 UvrB subunits scans DNA for abnormalities. When the presence of a lesion has been verified by UvrB, the UvrA molecules dissociate. In Oceanobacillus iheyensis (strain DSM 14371 / CIP 107618 / JCM 11309 / KCTC 3954 / HTE831), this protein is UvrABC system protein A.